A 427-amino-acid polypeptide reads, in one-letter code: Serine hydroxymethyltransferase (427 aa).

Residues L122 and 126-128 (GHL) contribute to the (6S)-5,6,7,8-tetrahydrofolate site. An N6-(pyridoxal phosphate)lysine modification is found at K231. (6S)-5,6,7,8-tetrahydrofolate is bound at residue 355-357 (SPF).

Belongs to the SHMT family. In terms of assembly, homodimer. Pyridoxal 5'-phosphate is required as a cofactor.

The protein localises to the cytoplasm. The enzyme catalyses (6R)-5,10-methylene-5,6,7,8-tetrahydrofolate + glycine + H2O = (6S)-5,6,7,8-tetrahydrofolate + L-serine. The protein operates within one-carbon metabolism; tetrahydrofolate interconversion. It functions in the pathway amino-acid biosynthesis; glycine biosynthesis; glycine from L-serine: step 1/1. Functionally, catalyzes the reversible interconversion of serine and glycine with tetrahydrofolate (THF) serving as the one-carbon carrier. This reaction serves as the major source of one-carbon groups required for the biosynthesis of purines, thymidylate, methionine, and other important biomolecules. Also exhibits THF-independent aldolase activity toward beta-hydroxyamino acids, producing glycine and aldehydes, via a retro-aldol mechanism. This is Serine hydroxymethyltransferase from Synechococcus sp. (strain ATCC 27144 / PCC 6301 / SAUG 1402/1) (Anacystis nidulans).